We begin with the raw amino-acid sequence, 356 residues long: Probable methyltransferase-like protein 15 homolog (356 aa).

S-adenosyl-L-methionine contacts are provided by residues 55–57, D74, F103, D126, and Q133; that span reads GGH.

It belongs to the methyltransferase superfamily. RsmH family.

In terms of biological role, probable S-adenosyl-L-methionine-dependent methyltransferase. The protein is Probable methyltransferase-like protein 15 homolog of Drosophila melanogaster (Fruit fly).